The sequence spans 271 residues: Urease accessory protein UreD (271 aa).

The protein belongs to the UreD family. In terms of assembly, ureD, UreF and UreG form a complex that acts as a GTP-hydrolysis-dependent molecular chaperone, activating the urease apoprotein by helping to assemble the nickel containing metallocenter of UreC. The UreE protein probably delivers the nickel.

Its subcellular location is the cytoplasm. Its function is as follows. Required for maturation of urease via the functional incorporation of the urease nickel metallocenter. This Haemophilus influenzae (strain PittGG) protein is Urease accessory protein UreD.